We begin with the raw amino-acid sequence, 153 residues long: uncharacterized protein (153 aa).

The tract at residues 17-78 (IYIHTPHPHP…HTTLSNLSLN (62 aa)) is disordered. Over residues 22 to 38 (PHPHPHPHPHTPTHTHP) the composition is skewed to basic residues.

This is an uncharacterized protein from Saccharomyces cerevisiae (strain ATCC 204508 / S288c) (Baker's yeast).